The following is a 400-amino-acid chain: Deoxyguanosinetriphosphate triphosphohydrolase-like protein (400 aa).

The 129-residue stretch at 76–204 (RLTHTLEVAQ…VNIADPLAYC (129 aa)) folds into the HD domain.

The protein belongs to the dGTPase family. Type 2 subfamily.

The chain is Deoxyguanosinetriphosphate triphosphohydrolase-like protein from Syntrophus aciditrophicus (strain SB).